Reading from the N-terminus, the 289-residue chain is Fatty acid elongase 1 (289 aa).

The next 7 helical transmembrane spans lie at 22 to 42 (VVGY…KLFA), 72 to 92 (AMVL…STVT), 123 to 143 (FWIG…IFLV), 152 to 172 (FLHW…YCVG), 177 to 197 (IWVA…FAIA), 208 to 228 (WAPY…FVTL), and 251 to 271 (LLMY…AHVL). Positions 154 to 158 (HWYHH) match the HxxHH motif motif. The Nucleophile role is filled by His-157. A glycan (N-linked (GlcNAc...) asparagine) is linked at Asn-282.

It belongs to the ELO family.

It is found in the endoplasmic reticulum membrane. It catalyses the reaction an acyl-CoA + malonyl-CoA + H(+) = a 3-oxoacyl-CoA + CO2 + CoA. The protein operates within lipid metabolism; fatty acid biosynthesis. Involved in the synthesis of fatty acids. Elongates C4 fatty acids. Required for the normal mitochondrial function, energy metabolism and growth of epimastigotes. In Trypanosoma cruzi (strain CL Brener), this protein is Fatty acid elongase 1.